Reading from the N-terminus, the 765-residue chain is Probable dipeptidyl peptidase 4 (765 aa).

An N-terminal signal peptide occupies residues 1-14 (MKWSILLLVGCAAA). N35, N78, N101, N110, N169, N218, N465, and N490 each carry an N-linked (GlcNAc...) asparagine glycan. S613 functions as the Charge relay system in the catalytic mechanism. N665 is a glycosylation site (N-linked (GlcNAc...) asparagine). Active-site charge relay system residues include D690 and H725.

The protein belongs to the peptidase S9B family.

The protein resides in the secreted. The catalysed reaction is Release of an N-terminal dipeptide, Xaa-Yaa-|-Zaa-, from a polypeptide, preferentially when Yaa is Pro, provided Zaa is neither Pro nor hydroxyproline.. Its function is as follows. Extracellular dipeptidyl-peptidase which removes N-terminal dipeptides sequentially from polypeptides having unsubstituted N-termini provided that the penultimate residue is proline. The polypeptide is Probable dipeptidyl peptidase 4 (dpp4) (Neosartorya fischeri (strain ATCC 1020 / DSM 3700 / CBS 544.65 / FGSC A1164 / JCM 1740 / NRRL 181 / WB 181) (Aspergillus fischerianus)).